Consider the following 419-residue polypeptide: Adenylosuccinate synthetase (419 aa).

GTP is bound by residues 12-18 (GDEGKGK) and 40-42 (GHT). The active-site Proton acceptor is the D13. Mg(2+)-binding residues include D13 and G40. Residues 13 to 16 (DEGK), 38 to 41 (NAGH), T128, R142, Q220, T235, and R299 contribute to the IMP site. H41 (proton donor) is an active-site residue. 295-301 (SITKRPR) serves as a coordination point for substrate. Residues R301, 327–329 (KSD), and 407–409 (SLG) contribute to the GTP site.

It belongs to the adenylosuccinate synthetase family. As to quaternary structure, homodimer. It depends on Mg(2+) as a cofactor.

It localises to the cytoplasm. The enzyme catalyses IMP + L-aspartate + GTP = N(6)-(1,2-dicarboxyethyl)-AMP + GDP + phosphate + 2 H(+). The protein operates within purine metabolism; AMP biosynthesis via de novo pathway; AMP from IMP: step 1/2. In terms of biological role, plays an important role in the de novo pathway of purine nucleotide biosynthesis. Catalyzes the first committed step in the biosynthesis of AMP from IMP. This Azobacteroides pseudotrichonymphae genomovar. CFP2 protein is Adenylosuccinate synthetase.